The sequence spans 298 residues: Ethanolamine ammonia-lyase small subunit (298 aa).

Positions 210, 231, and 261 each coordinate adenosylcob(III)alamin.

This sequence belongs to the EutC family. In terms of assembly, the basic unit is a heterodimer which dimerizes to form tetramers. The heterotetramers trimerize; 6 large subunits form a core ring with 6 small subunits projecting outwards. Requires adenosylcob(III)alamin as cofactor.

The protein resides in the bacterial microcompartment. The enzyme catalyses ethanolamine = acetaldehyde + NH4(+). Its pathway is amine and polyamine degradation; ethanolamine degradation. In terms of biological role, catalyzes the deamination of various vicinal amino-alcohols to oxo compounds. Allows this organism to utilize ethanolamine as the sole source of nitrogen and carbon in the presence of external vitamin B12. This Salmonella schwarzengrund (strain CVM19633) protein is Ethanolamine ammonia-lyase small subunit.